We begin with the raw amino-acid sequence, 398 residues long: tRNA-specific 2-thiouridylase MnmA (398 aa).

Residues 18–25 and Leu44 each bind ATP; that span reads AMSGGVDS. The active-site Nucleophile is Cys112. A disulfide bond links Cys112 and Cys213. Gly136 contributes to the ATP binding site. The tract at residues 163–165 is interaction with tRNA; that stretch reads RDQ. The Cysteine persulfide intermediate role is filled by Cys213.

It belongs to the MnmA/TRMU family.

It is found in the cytoplasm. It carries out the reaction S-sulfanyl-L-cysteinyl-[protein] + uridine(34) in tRNA + AH2 + ATP = 2-thiouridine(34) in tRNA + L-cysteinyl-[protein] + A + AMP + diphosphate + H(+). In terms of biological role, catalyzes the 2-thiolation of uridine at the wobble position (U34) of tRNA, leading to the formation of s(2)U34. The protein is tRNA-specific 2-thiouridylase MnmA of Sinorhizobium fredii (strain NBRC 101917 / NGR234).